Reading from the N-terminus, the 355-residue chain is Uroporphyrinogen decarboxylase (355 aa).

Substrate contacts are provided by residues 27 to 31 (RQAGR), Asp78, Tyr155, Thr210, and His328.

This sequence belongs to the uroporphyrinogen decarboxylase family. Homodimer.

Its subcellular location is the cytoplasm. It catalyses the reaction uroporphyrinogen III + 4 H(+) = coproporphyrinogen III + 4 CO2. The protein operates within porphyrin-containing compound metabolism; protoporphyrin-IX biosynthesis; coproporphyrinogen-III from 5-aminolevulinate: step 4/4. Its function is as follows. Catalyzes the decarboxylation of four acetate groups of uroporphyrinogen-III to yield coproporphyrinogen-III. This Pseudomonas fluorescens (strain Pf0-1) protein is Uroporphyrinogen decarboxylase.